The sequence spans 598 residues: Fructan 6-exohydrolase (598 aa).

The first 30 residues, 1–30, serve as a signal peptide directing secretion; it reads MAARLPLAACVVAFHLCLLLSSLVRSPSTA. The active site involves aspartate 65. Asparagine 93, asparagine 288, and asparagine 351 each carry an N-linked (GlcNAc...) asparagine glycan. An intrachain disulfide couples cysteine 451 to cysteine 497. Asparagine 572 carries N-linked (GlcNAc...) asparagine glycosylation.

The protein belongs to the glycosyl hydrolase 32 family. As to expression, expressed in leaves, stems, roots and inflorescences. Maximum expression is detected in stems, particularly the penultimate internode.

It catalyses the reaction Hydrolysis of terminal, non-reducing (2-&gt;6)-linked beta-D-fructofuranose residues in fructans.. Not inhibited by sucrose. Its function is as follows. Hydrolyzes levan-type beta-(2-&gt;6)-linked fructans to fructose, but not inulin-type beta-(2-&gt;1)-linked fructans. This chain is Fructan 6-exohydrolase, found in Triticum aestivum (Wheat).